The chain runs to 459 residues: tRNA-2-methylthio-N(6)-dimethylallyladenosine synthase (459 aa).

Positions 1-116 constitute an MTTase N-terminal domain; that stretch reads MRAHLITYGC…IGKALETNER (116 aa). [4Fe-4S] cluster contacts are provided by cysteine 10, cysteine 46, cysteine 79, cysteine 148, cysteine 152, and cysteine 155. The Radical SAM core domain maps to 134-367; sequence PQGKLQAHLT…IAKQKEWSAR (234 aa). The TRAM domain occupies 370–433; the sequence is AAKVGTIQEV…PHMLYGRLIG (64 aa).

Belongs to the methylthiotransferase family. MiaB subfamily. In terms of assembly, monomer. [4Fe-4S] cluster serves as cofactor.

The protein localises to the cytoplasm. The enzyme catalyses N(6)-dimethylallyladenosine(37) in tRNA + (sulfur carrier)-SH + AH2 + 2 S-adenosyl-L-methionine = 2-methylsulfanyl-N(6)-dimethylallyladenosine(37) in tRNA + (sulfur carrier)-H + 5'-deoxyadenosine + L-methionine + A + S-adenosyl-L-homocysteine + 2 H(+). Functionally, catalyzes the methylthiolation of N6-(dimethylallyl)adenosine (i(6)A), leading to the formation of 2-methylthio-N6-(dimethylallyl)adenosine (ms(2)i(6)A) at position 37 in tRNAs that read codons beginning with uridine. The sequence is that of tRNA-2-methylthio-N(6)-dimethylallyladenosine synthase from Deinococcus geothermalis (strain DSM 11300 / CIP 105573 / AG-3a).